We begin with the raw amino-acid sequence, 518 residues long: Glutamate--cysteine ligase (518 aa).

Belongs to the glutamate--cysteine ligase type 1 family. Type 1 subfamily.

It catalyses the reaction L-cysteine + L-glutamate + ATP = gamma-L-glutamyl-L-cysteine + ADP + phosphate + H(+). It functions in the pathway sulfur metabolism; glutathione biosynthesis; glutathione from L-cysteine and L-glutamate: step 1/2. This chain is Glutamate--cysteine ligase, found in Shigella boydii serotype 18 (strain CDC 3083-94 / BS512).